A 439-amino-acid chain; its full sequence is Chaperone SurA (439 aa).

An N-terminal signal peptide occupies residues 1–27 (MRRISSRLSLVLFAALSCATALFPAHA). PpiC domains are found at residues 180–281 (GEEF…KLLD) and 293–391 (LEQT…QVEA).

It is found in the periplasm. It carries out the reaction [protein]-peptidylproline (omega=180) = [protein]-peptidylproline (omega=0). Functionally, chaperone involved in the correct folding and assembly of outer membrane proteins. Recognizes specific patterns of aromatic residues and the orientation of their side chains, which are found more frequently in integral outer membrane proteins. May act in both early periplasmic and late outer membrane-associated steps of protein maturation. The protein is Chaperone SurA of Aromatoleum aromaticum (strain DSM 19018 / LMG 30748 / EbN1) (Azoarcus sp. (strain EbN1)).